A 418-amino-acid polypeptide reads, in one-letter code: Putative methylthiotransferase HP_0285 (418 aa).

In terms of domain architecture, MTTase N-terminal spans 2–110 (KKVYFKTFGC…INALLQEKKR (109 aa)). [4Fe-4S] cluster is bound by residues cysteine 11, cysteine 45, cysteine 74, cysteine 144, cysteine 148, and cysteine 151. Residues 130–355 (FVGKTRAFIK…KDLIFHKNKA (226 aa)) enclose the Radical SAM core domain.

Belongs to the methylthiotransferase family. [4Fe-4S] cluster serves as cofactor.

This Helicobacter pylori (strain ATCC 700392 / 26695) (Campylobacter pylori) protein is Putative methylthiotransferase HP_0285.